The chain runs to 132 residues: MSFEYRHYKREAKICTCRGGWAHVLLCIGVSQGACAEHLPHRPAVEKDVPGAGEVLFMCSWRIFPVASASPSSSISGLAGHSVFLVPGLAAHPGSHSDQPPGVPSRRKSRLERWSPSVSRSTSPPTEAPFCL.

A signal peptide spans 1-35 (MSFEYRHYKREAKICTCRGGWAHVLLCIGVSQGAC). Residues 91–132 (AHPGSHSDQPPGVPSRRKSRLERWSPSVSRSTSPPTEAPFCL) are disordered. The span at 115–125 (SPSVSRSTSPP) shows a compositional bias: low complexity.

Its subcellular location is the secreted. This is an uncharacterized protein from Homo sapiens (Human).